A 378-amino-acid chain; its full sequence is Alginate lyase (378 aa).

The N-terminal stretch at 1-28 (MQTPKLIRPTLLSMAILSSMAWATGASA) is a signal peptide. Substrate is bound by residues 67–68 (SK), 140–141 (HT), and Y258.

Belongs to the polysaccharide lyase 5 family.

It localises to the periplasm. The catalysed reaction is Eliminative cleavage of alginate to give oligosaccharides with 4-deoxy-alpha-L-erythro-hex-4-enuronosyl groups at their non-reducing ends and beta-D-mannuronate at their reducing end.. With respect to regulation, the monovalent cation sodium enhances activity but is not absolutely required. Functionally, catalyzes the depolymerization of alginate by cleaving the beta-1,4 glycosidic bond between two adjacent sugar residues via a beta-elimination mechanism. Degrades deacetylated polymannuronate (polyM) alginate from P.aeruginosa more efficiently than non-deacetylated polyM and alginate from M.pyrifera. AlgL from P.syringae also degrades its own alginate, which may indicate a role in cleaving preformed alginate and/or in determining the length of the alginate polymer. May serve to degrade mislocalized alginate that is trapped in the periplasmic space. The sequence is that of Alginate lyase from Pseudomonas syringae pv. syringae.